We begin with the raw amino-acid sequence, 71 residues long: Conotoxin Lt11.3 (71 aa).

The first 26 residues, 1 to 26, serve as a signal peptide directing secretion; the sequence is MMFRLTSVGCILLVIAFLNLVGLTNA. Intrachain disulfides connect cysteine 27-cysteine 41, cysteine 34-cysteine 46, cysteine 40-cysteine 50, and cysteine 45-cysteine 54. Proline 57 carries the post-translational modification Proline amide. Residues 61 to 71 constitute a propeptide that is removed on maturation; that stretch reads TRLQGFFKHRR.

The protein belongs to the conotoxin I2 superfamily. Expressed by the venom duct.

Its subcellular location is the secreted. Functionally, probable neurotoxin. This chain is Conotoxin Lt11.3, found in Conus litteratus (Lettered cone).